The sequence spans 103 residues: NADH-quinone oxidoreductase subunit K (103 aa).

The next 3 helical transmembrane spans lie at 4 to 24 (LTSY…GVIA), 28 to 48 (IFVI…FLIT), and 64 to 84 (MVIS…ILLF).

The protein belongs to the complex I subunit 4L family. In terms of assembly, NDH-1 is composed of 14 different subunits. Subunits NuoA, H, J, K, L, M, N constitute the membrane sector of the complex.

The protein localises to the cell inner membrane. The catalysed reaction is a quinone + NADH + 5 H(+)(in) = a quinol + NAD(+) + 4 H(+)(out). Functionally, NDH-1 shuttles electrons from NADH, via FMN and iron-sulfur (Fe-S) centers, to quinones in the respiratory chain. The immediate electron acceptor for the enzyme in this species is believed to be ubiquinone. Couples the redox reaction to proton translocation (for every two electrons transferred, four hydrogen ions are translocated across the cytoplasmic membrane), and thus conserves the redox energy in a proton gradient. This chain is NADH-quinone oxidoreductase subunit K, found in Aliarcobacter butzleri (strain RM4018) (Arcobacter butzleri).